A 529-amino-acid polypeptide reads, in one-letter code: Serine hydroxymethyltransferase 3, chloroplastic (529 aa).

Residues 1 to 60 constitute a chloroplast transit peptide; the sequence is MQACCGGNSMASLQQPGRVQGSVFPPIMPPVTKFSQQLKFNISKPFRSSFLKRNLVSEMR. K314 carries the N6-(pyridoxal phosphate)lysine modification.

The protein belongs to the SHMT family. Homotetramer. Pyridoxal 5'-phosphate serves as cofactor.

It localises to the plastid. It is found in the chloroplast. The enzyme catalyses (6R)-5,10-methylene-5,6,7,8-tetrahydrofolate + glycine + H2O = (6S)-5,6,7,8-tetrahydrofolate + L-serine. The protein operates within one-carbon metabolism; tetrahydrofolate interconversion. Inhibited by 5-CH3-H4PteGlu1/5 and 5-HCO-H4PteGlu1/5 in vitro. Functionally, catalyzes the interconversion of serine and glycine and directs the hydroxymethyl moiety of serine into the metabolic network of H4PteGlu(n)-bound one-carbon units. This is Serine hydroxymethyltransferase 3, chloroplastic from Arabidopsis thaliana (Mouse-ear cress).